The chain runs to 298 residues: 4-hydroxy-tetrahydrodipicolinate synthase (298 aa).

Thr-48 provides a ligand contact to pyruvate. Tyr-137 acts as the Proton donor/acceptor in catalysis. The active-site Schiff-base intermediate with substrate is Lys-166. Ile-207 provides a ligand contact to pyruvate.

It belongs to the DapA family. Homotetramer; dimer of dimers.

It localises to the cytoplasm. The enzyme catalyses L-aspartate 4-semialdehyde + pyruvate = (2S,4S)-4-hydroxy-2,3,4,5-tetrahydrodipicolinate + H2O + H(+). Its pathway is amino-acid biosynthesis; L-lysine biosynthesis via DAP pathway; (S)-tetrahydrodipicolinate from L-aspartate: step 3/4. In terms of biological role, catalyzes the condensation of (S)-aspartate-beta-semialdehyde [(S)-ASA] and pyruvate to 4-hydroxy-tetrahydrodipicolinate (HTPA). The protein is 4-hydroxy-tetrahydrodipicolinate synthase of Campylobacter jejuni subsp. doylei (strain ATCC BAA-1458 / RM4099 / 269.97).